The following is a 183-amino-acid chain: ATP-dependent protease subunit HslV (183 aa).

Residue Thr13 is part of the active site. 3 residues coordinate Na(+): Gly168, Cys171, and Thr174.

This sequence belongs to the peptidase T1B family. HslV subfamily. A double ring-shaped homohexamer of HslV is capped on each side by a ring-shaped HslU homohexamer. The assembly of the HslU/HslV complex is dependent on binding of ATP.

The protein resides in the cytoplasm. It catalyses the reaction ATP-dependent cleavage of peptide bonds with broad specificity.. Allosterically activated by HslU binding. Functionally, protease subunit of a proteasome-like degradation complex believed to be a general protein degrading machinery. In Xanthomonas oryzae pv. oryzae (strain MAFF 311018), this protein is ATP-dependent protease subunit HslV.